The chain runs to 156 residues: Small ribosomal subunit protein uS7 (156 aa).

The protein belongs to the universal ribosomal protein uS7 family. As to quaternary structure, part of the 30S ribosomal subunit. Contacts proteins S9 and S11.

Functionally, one of the primary rRNA binding proteins, it binds directly to 16S rRNA where it nucleates assembly of the head domain of the 30S subunit. Is located at the subunit interface close to the decoding center, probably blocks exit of the E-site tRNA. The protein is Small ribosomal subunit protein uS7 of Actinobacillus succinogenes (strain ATCC 55618 / DSM 22257 / CCUG 43843 / 130Z).